We begin with the raw amino-acid sequence, 130 residues long: DNA-directed RNA polymerase subunit omega (130 aa).

A disordered region spans residues 110-130 (EELLKGLEGLAPPEEQPEEEE).

Belongs to the RNA polymerase subunit omega family. In terms of assembly, the RNAP catalytic core consists of 2 alpha, 1 beta, 1 beta' and 1 omega subunit. When a sigma factor is associated with the core the holoenzyme is formed, which can initiate transcription.

It carries out the reaction RNA(n) + a ribonucleoside 5'-triphosphate = RNA(n+1) + diphosphate. Its function is as follows. Promotes RNA polymerase assembly. Latches the N- and C-terminal regions of the beta' subunit thereby facilitating its interaction with the beta and alpha subunits. This is DNA-directed RNA polymerase subunit omega from Afipia carboxidovorans (strain ATCC 49405 / DSM 1227 / KCTC 32145 / OM5) (Oligotropha carboxidovorans).